A 360-amino-acid chain; its full sequence is Type 2 DNA topoisomerase 6 subunit A (360 aa).

Positions 3–140 constitute a Topo IIA-type catalytic domain; that stretch reads EIERRCLRAL…FHIRPEEDGA (138 aa). The O-(5'-phospho-DNA)-tyrosine intermediate role is filled by tyrosine 97. Mg(2+) is bound by residues glutamate 193 and aspartate 245.

Belongs to the TOP6A family. As to quaternary structure, homodimer. Heterotetramer of two Top6A and two Top6B chains. Mg(2+) serves as cofactor.

It carries out the reaction ATP-dependent breakage, passage and rejoining of double-stranded DNA.. Its function is as follows. Relaxes both positive and negative superturns and exhibits a strong decatenase activity. The polypeptide is Type 2 DNA topoisomerase 6 subunit A (Archaeoglobus fulgidus (strain ATCC 49558 / DSM 4304 / JCM 9628 / NBRC 100126 / VC-16)).